We begin with the raw amino-acid sequence, 709 residues long: Fatty acid oxidation complex subunit alpha (709 aa).

The tract at residues 1-188 is enoyl-CoA hydratase; that stretch reads MEKTFNLTRR…KMGLVNDVVP (188 aa). Residues 308-709 form a 3-hydroxyacyl-CoA dehydrogenase region; sequence RKVKKAVILG…EMAAEKTRFF (402 aa).

In the N-terminal section; belongs to the enoyl-CoA hydratase/isomerase family. This sequence in the central section; belongs to the 3-hydroxyacyl-CoA dehydrogenase family. Heterotetramer of two alpha chains (FadJ) and two beta chains (FadI).

It is found in the cytoplasm. It catalyses the reaction a (3S)-3-hydroxyacyl-CoA = a (2E)-enoyl-CoA + H2O. The enzyme catalyses a 4-saturated-(3S)-3-hydroxyacyl-CoA = a (3E)-enoyl-CoA + H2O. The catalysed reaction is a (3S)-3-hydroxyacyl-CoA + NAD(+) = a 3-oxoacyl-CoA + NADH + H(+). It carries out the reaction (3S)-3-hydroxybutanoyl-CoA = (3R)-3-hydroxybutanoyl-CoA. Its pathway is lipid metabolism; fatty acid beta-oxidation. Its function is as follows. Catalyzes the formation of a hydroxyacyl-CoA by addition of water on enoyl-CoA. Also exhibits 3-hydroxyacyl-CoA epimerase and 3-hydroxyacyl-CoA dehydrogenase activities. This chain is Fatty acid oxidation complex subunit alpha, found in Shewanella sp. (strain MR-7).